The following is a 251-amino-acid chain: Dihydroorotate dehydrogenase B (NAD(+)), electron transfer subunit homolog (251 aa).

The region spanning 2–101 (LAELNAEVLE…FLPLGKRLFS (100 aa)) is the FAD-binding FR-type domain. Residues Cys-217, Cys-222, Cys-225, and Cys-238 each contribute to the [2Fe-2S] cluster site.

Belongs to the PyrK family. Requires [2Fe-2S] cluster as cofactor. FAD serves as cofactor.

The protein is Dihydroorotate dehydrogenase B (NAD(+)), electron transfer subunit homolog of Aquifex aeolicus (strain VF5).